Reading from the N-terminus, the 129-residue chain is Transcriptional activator protein (129 aa).

Residues 1-20 form a disordered region; that stretch reads MRSSSPSQPPSIKRAHRQAK. The Nuclear localization signal signature appears at 13 to 28; that stretch reads KRAHRQAKKRAIRRRR. A zinc finger spans residues 33–50; that stretch reads CGCSIYFHLGCAGHGFTH. The segment at 73-118 is disordered; that stretch reads LFQDTQSRGPTVYQNEGIPRTDTVQPQPEESVASPQSLPELPSLDD. 2 stretches are compositionally biased toward polar residues: residues 74–86 and 94–109; these read FQDT…TVYQ and DTVQ…SPQS. A Phosphoserine; by host modification is found at serine 109. The interval 115-129 is transactivation; the sequence is SLDDVDDSFWINLFS.

This sequence belongs to the geminiviridae transcriptional activator protein family. Monomer. Homodimer. Homooligomer. Self-interaction correlates with nuclear localization and efficient activation of transcription. Monomers suppress local silencing by interacting with and inactivating host adenosine kinase 2 (ADK2) in the cytoplasm. Interacts with and inhibits host SNF1 kinase. Phosphorylated at Ser-109 by A.thaliana KIN10.

It localises to the host nucleus. Its subcellular location is the host cytoplasm. Its function is as follows. Strong activator of the late viral genes promoters. Enhances the expression of the capsid protein and nuclear shuttle protein. Acts as a suppressor of RNA-mediated gene silencing, also known as post-transcriptional gene silencing (PTGS), a mechanism of plant viral defense that limits the accumulation of viral RNAs. Suppresses the host RNA silencing by inhibiting adenosine kinase 2 (ADK2), a kinase involved in a general methylation pathway. Also suppresses the host basal defense by interacting with and inhibiting SNF1 kinase, a key regulator of cell metabolism implicated in innate antiviral defense. Determines pathogenicity. The protein is Transcriptional activator protein of Nicotiana tabacum (Common tobacco).